The primary structure comprises 328 residues: P2Y purinoceptor 6 (328 aa).

The Extracellular portion of the chain corresponds to 1 to 27; that stretch reads MERDNGTIQAPGLPPTTCVYREDFKRL. An N-linked (GlcNAc...) asparagine glycan is attached at Asn-5. Residues 28 to 48 form a helical membrane-spanning segment; the sequence is LLPPVYSVVLVVGLPLNVCVI. Residues 49–62 are Cytoplasmic-facing; it reads AQICASRRTLTRSA. The helical transmembrane segment at 63-83 threads the bilayer; that stretch reads VYTLNLALADLLYACSLPLLI. Residues 84-101 are Extracellular-facing; the sequence is YNYARGDHWPFGDLACRL. Residues Cys-99 and Cys-177 are joined by a disulfide bond. A helical membrane pass occupies residues 102–122; that stretch reads VRFLFYANLHGSILFLTCISF. Over 123–144 the chain is Cytoplasmic; sequence QRYLGICHPLAPWHKRGGRRAA. Residues 145–165 traverse the membrane as a helical segment; that stretch reads WVVCGVVWLVVTAQCLPTAVF. Residues 166 to 194 lie on the Extracellular side of the membrane; sequence AATGIQRNRTVCYDLSPPILSTRYLPYGM. A glycan (N-linked (GlcNAc...) asparagine) is linked at Asn-173. A helical membrane pass occupies residues 195 to 215; it reads ALTVIGFLLPFTALLACYCRM. Topologically, residues 216–236 are cytoplasmic; that stretch reads ARRLCRQDGPAGPVAQERRSK. Residues 237-257 form a helical membrane-spanning segment; it reads AARMAVVVAAVFVISFLPFHI. Residues 258 to 280 are Extracellular-facing; it reads TKTAYLAVRSTPGVSCPVLETFA. A helical transmembrane segment spans residues 281-303; it reads AAYKGTRPFASANSVLDPILFYF. Topologically, residues 304–328 are cytoplasmic; sequence TQQKFRRQPHDLLQKLTAKWQRQRV.

Belongs to the G-protein coupled receptor 1 family. Abundantly expressed in various tissues including lung, stomach, intestine, spleen, mesentery, heart, and, most prominently, aorta.

The protein localises to the cell membrane. In terms of biological role, receptor for extracellular UTP &gt; ADP = 2-methylthio-ATP &gt; ADP-beta-S &gt; ATP = ATP-gamma-S. The activity of this receptor is mediated by G proteins which activate a phosphatidylinositol-calcium second messenger system. Functionally coupled to phospholipase C. The chain is P2Y purinoceptor 6 (P2ry6) from Rattus norvegicus (Rat).